We begin with the raw amino-acid sequence, 144 residues long: UPF0102 protein Veis_0630 (144 aa).

The tract at residues 11 to 31 is disordered; the sequence is PPAAAPGPAPAPASAATASER.

It belongs to the UPF0102 family.

The polypeptide is UPF0102 protein Veis_0630 (Verminephrobacter eiseniae (strain EF01-2)).